A 1033-amino-acid chain; its full sequence is Phospholipid-transporting ATPase neo1 (1033 aa).

4 consecutive transmembrane segments (helical) span residues 133 to 153 (LKIGYLSTYIAPLIFVLLITL), 274 to 294 (TLWANTVLASDGVYGVVVYTG), 317 to 337 (INFYSKILCTFVLVLSIGLTF), and 344 to 364 (DWYISVFRYLILFSSIIPINL). The active-site 4-aspartylphosphate intermediate is the Asp408. Residues Asp408, Lys409, Thr410, Glu491, Phe528, Ser530, Lys533, Lys551, Arg580, Thr581, Thr662, Gly663, Asp664, Arg744, and Lys750 each coordinate ATP. Asp408 serves as a coordination point for Mg(2+). Thr410 contacts Mg(2+). The next 6 helical transmembrane spans lie at 768–788 (IGDGGNDVGMIQVANVGIGIV), 843–863 (VVYSVISAFEPIALFQGLLLV), 913–933 (VLISVYQGLIIQLFTFYLIGF), 939–959 (MLAVCFSCLIFNELIMVALQI), 965–985 (TIVMSELLTLMMYILSVPFLT), and 992–1012 (FLLGLKFYWVSALILFISLLP). Asp770 contributes to the Mg(2+) binding site. Positions 773 and 774 each coordinate ATP. Asp774 is a Mg(2+) binding site.

Belongs to the cation transport ATPase (P-type) (TC 3.A.3) family. Type IV subfamily. As to quaternary structure, functions without a CDC50/LEM3 family accessory subunit. It depends on Mg(2+) as a cofactor.

The protein localises to the endosome membrane. It is found in the golgi apparatus membrane. It carries out the reaction ATP + H2O + phospholipidSide 1 = ADP + phosphate + phospholipidSide 2.. The enzyme catalyses a 1,2-diacyl-sn-glycero-3-phospho-L-serine(out) + ATP + H2O = a 1,2-diacyl-sn-glycero-3-phospho-L-serine(in) + ADP + phosphate + H(+). It catalyses the reaction a 1,2-diacyl-sn-glycero-3-phosphoethanolamine(out) + ATP + H2O = a 1,2-diacyl-sn-glycero-3-phosphoethanolamine(in) + ADP + phosphate + H(+). Functionally, flippase that catalyzes the hydrolysis of ATP coupled to the transport of lysophosphatidylserine, phosphatidylethanolamine, and phosphatidylserine from the lumenal to the cytosolic leaflet of the Golgi apparatus membrane and ensures the maintenance of asymmetric distribution of phospholipids. This is Phospholipid-transporting ATPase neo1 from Schizosaccharomyces pombe (strain 972 / ATCC 24843) (Fission yeast).